Reading from the N-terminus, the 152-residue chain is UPF0225 protein YchJ (152 aa).

It belongs to the UPF0225 family.

This chain is UPF0225 protein YchJ, found in Shigella dysenteriae serotype 1 (strain Sd197).